Reading from the N-terminus, the 161-residue chain is Nucleotide-binding protein Mmwyl1_2033 (161 aa).

This sequence belongs to the YajQ family.

Nucleotide-binding protein. This Marinomonas sp. (strain MWYL1) protein is Nucleotide-binding protein Mmwyl1_2033.